The primary structure comprises 438 residues: Transposon Ty2-C Gag polyprotein (438 aa).

Composition is skewed to polar residues over residues Met1–Arg11, Ala19–Asn39, and Lys49–Thr60. Disordered regions lie at residues Met1 to His88, Asn365 to His397, and Ser419 to Ile438. Residues Glu295–His397 form an RNA-binding region. Over residues Thr369–Asn382 the composition is skewed to low complexity.

Homotrimer.

The protein resides in the cytoplasm. Its function is as follows. Capsid protein (CA) is the structural component of the virus-like particle (VLP), forming the shell that encapsulates the retrotransposons dimeric RNA genome. The particles are assembled from trimer-clustered units and there are holes in the capsid shells that allow for the diffusion of macromolecules. CA also has nucleocapsid-like chaperone activity, promoting primer tRNA(i)-Met annealing to the multipartite primer-binding site (PBS), dimerization of Ty2 RNA and initiation of reverse transcription. The polypeptide is Transposon Ty2-C Gag polyprotein (TY2A-C) (Saccharomyces cerevisiae (strain ATCC 204508 / S288c) (Baker's yeast)).